Consider the following 90-residue polypeptide: MARVTVQDAVEKIGNRFDLVLISSRRARQMQTGGKDALVPEENDKTTVIALREIEEGLITKELLDARERQEQQEQDAAELAAVSSITHNR.

The interval 69 to 90 is disordered; sequence RQEQQEQDAAELAAVSSITHNR.

The protein belongs to the RNA polymerase subunit omega family. The RNAP catalytic core consists of 2 alpha, 1 beta, 1 beta' and 1 omega subunit. When a sigma factor is associated with the core the holoenzyme is formed, which can initiate transcription.

The catalysed reaction is RNA(n) + a ribonucleoside 5'-triphosphate = RNA(n+1) + diphosphate. Functionally, promotes RNA polymerase assembly. Latches the N- and C-terminal regions of the beta' subunit thereby facilitating its interaction with the beta and alpha subunits. The chain is DNA-directed RNA polymerase subunit omega from Aliivibrio fischeri (strain ATCC 700601 / ES114) (Vibrio fischeri).